The chain runs to 295 residues: Ethanolamine ammonia-lyase small subunit (295 aa).

3 residues coordinate adenosylcob(III)alamin: V207, E228, and C258.

This sequence belongs to the EutC family. The basic unit is a heterodimer which dimerizes to form tetramers. The heterotetramers trimerize; 6 large subunits form a core ring with 6 small subunits projecting outwards. Adenosylcob(III)alamin serves as cofactor.

Its subcellular location is the bacterial microcompartment. The enzyme catalyses ethanolamine = acetaldehyde + NH4(+). It functions in the pathway amine and polyamine degradation; ethanolamine degradation. Catalyzes the deamination of various vicinal amino-alcohols to oxo compounds. Allows this organism to utilize ethanolamine as the sole source of nitrogen and carbon in the presence of external vitamin B12. The sequence is that of Ethanolamine ammonia-lyase small subunit from Escherichia coli O7:K1 (strain IAI39 / ExPEC).